A 1412-amino-acid polypeptide reads, in one-letter code: DNA-directed RNA polymerase subunit beta' (1412 aa).

Residues C70, C72, C85, and C88 each coordinate Zn(2+). 3 residues coordinate Mg(2+): D460, D462, and D464. Residues C814, C888, C895, and C898 each coordinate Zn(2+). Residues 1378 to 1412 are disordered; it reads EREAARQLANPFEDAPVTVDADAPQSDAGQEGSAE.

The protein belongs to the RNA polymerase beta' chain family. In terms of assembly, the RNAP catalytic core consists of 2 alpha, 1 beta, 1 beta' and 1 omega subunit. When a sigma factor is associated with the core the holoenzyme is formed, which can initiate transcription. It depends on Mg(2+) as a cofactor. Zn(2+) is required as a cofactor.

The enzyme catalyses RNA(n) + a ribonucleoside 5'-triphosphate = RNA(n+1) + diphosphate. Its function is as follows. DNA-dependent RNA polymerase catalyzes the transcription of DNA into RNA using the four ribonucleoside triphosphates as substrates. This is DNA-directed RNA polymerase subunit beta' from Bordetella petrii (strain ATCC BAA-461 / DSM 12804 / CCUG 43448).